A 2053-amino-acid polypeptide reads, in one-letter code: Integrator complex subunit 1 (2053 aa).

Disordered regions lie at residues 36-58 (KILP…ALAS) and 249-285 (SLPS…ESEP). A compositionally biased stretch (polar residues) spans 268–283 (DNSTQSLDASPLNTES). The chain crosses the membrane as a helical span at residues 708 to 728 (LAIIAFYWKAWLILLMISAHN).

This sequence belongs to the Integrator subunit 1 family. In terms of assembly, belongs to the multiprotein complex Integrator, at least composed of IntS1, IntS2, IntS3, IntS4, omd/IntS5, IntS6, defl/IntS7, IntS8, IntS9, IntS10, IntS11, IntS12, asun/IntS13, IntS14 and IntS15. The core complex associates with protein phosphatase 2A subunits mts/PP2A and Pp2A-29B, to form the Integrator-PP2A (INTAC) complex. Within the complex, interacts with IntS12 and IntS9. Interaction with IntS12 is likely to be important for promoting 3'-end processing of snRNAs. Interacts with Mediator complex members Cdk8 and CycC.

It is found in the nucleus membrane. The protein localises to the nucleus. Component of the integrator complex, a multiprotein complex that terminates RNA polymerase II (Pol II) transcription in the promoter-proximal region of genes. The integrator complex provides a quality checkpoint during transcription elongation by driving premature transcription termination of transcripts that are unfavorably configured for transcriptional elongation: the complex terminates transcription by (1) catalyzing dephosphorylation of the C-terminal domain (CTD) of Pol II subunit Polr2A/Rbp1 and Spt5, and (2) degrading the exiting nascent RNA transcript via endonuclease activity. The integrator complex is also involved in the 3'-end processing of the U7 snRNA, and also the spliceosomal snRNAs U1, U2, U4 and U5. Required for the normal expression of the Integrator complex component IntS12. The sequence is that of Integrator complex subunit 1 from Drosophila melanogaster (Fruit fly).